A 253-amino-acid chain; its full sequence is Probable transcriptional regulatory protein Tery_2125 (253 aa).

The protein belongs to the TACO1 family.

The protein resides in the cytoplasm. The sequence is that of Probable transcriptional regulatory protein Tery_2125 from Trichodesmium erythraeum (strain IMS101).